Here is a 922-residue protein sequence, read N- to C-terminus: Centrosomal protein of 104 kDa (922 aa).

Residues 210–277 (EVAQIIRRLD…DLAKEKKQQM (68 aa)) adopt a coiled-coil conformation. A compositionally biased stretch (low complexity) spans 307 to 318 (PLQPLASPSSPQ). Disordered stretches follow at residues 307–333 (PLQPLASPSSPQHWKAVSSLPRTEELA) and 348–419 (LASS…PLTE). Residues 396–407 (PEVREADSDVRR) show a composition bias toward basic and acidic residues. HEAT repeat units lie at residues 526-564 (AIPLLLARTGDSSARLRVMALNFIQEMALFKEVRSLQLI) and 601-637 (GFTVDNVMKFAVSALEHRVYEVRETAVRIILDMYRQH). Basic and acidic residues-rich tracts occupy residues 673-697 (TEAEGKTQKRVVTKEAEKQKKEETK) and 714-725 (QEKENEAVKLKN). Disordered regions lie at residues 673 to 741 (TEAE…TPEI) and 880 to 922 (PAPQ…HTRR). Positions 678-705 (KTQKRVVTKEAEKQKKEETKALQGLSAA) form a coiled coil.

As to quaternary structure, interacts with CCP110 and CEP97. Interacts with ARMC9, TOGARAM1, CCDC66 and CSPP1. As to expression, expressed predominantly in the brain. Also detected, although at much lower levels, in the heart and the liver. Within the brain, expressed in the cerebral cortex, hippocampus, cerebellum and brainstem.

It is found in the cell projection. Its subcellular location is the cilium. The protein resides in the cytoplasm. The protein localises to the cytoskeleton. It localises to the microtubule organizing center. It is found in the centrosome. Its subcellular location is the centriole. The protein resides in the spindle pole. Functionally, required for ciliogenesis and for structural integrity at the ciliary tip. The protein is Centrosomal protein of 104 kDa (Cep104) of Rattus norvegicus (Rat).